A 283-amino-acid chain; its full sequence is MGASASTNEQIIENRILNEAYNSCPSVGTANVTTLSGIKFEAPANCNPPSAFVIGQTATVDSNCLLTSLQKGAASAASKLSSQSKAGLGISVSTNISEVENSIANITNNTCAGLATNNVVDITDTVIKACQFRVVQNASSKVSCQINNTQNLISKIAADATSQAKGGSLFGDLFGGGLGGIIAAIIIIVIIAVIIGAVVYFIKQSSKNKGAEKIIENPETAALLVGGFKSFIGGASDFVDGLKKTNMYKFIVLLIMVLIIVILLKTLDIPNPINHPNDSNRIY.

The N-myristoyl glycine; by host moiety is linked to residue G2. N-linked (GlcNAc...) asparagine; by host glycans are attached at residues N31, N95, N105, N108, N137, and N147. 2 consecutive transmembrane segments (helical) span residues 181–201 (IIAA…VVYF) and 250–270 (FIVL…LDIP). The N-linked (GlcNAc...) asparagine; by host glycan is linked to N277.

Its subcellular location is the membrane. This is an uncharacterized protein from Acanthamoeba polyphaga (Amoeba).